We begin with the raw amino-acid sequence, 142 residues long: Hemoglobin subunit alpha (142 aa).

One can recognise a Globin domain in the interval Val2 to Arg142. Phosphoserine is present on Ser4. N6-succinyllysine occurs at positions 8 and 12. Lys17 is modified (N6-acetyllysine; alternate). The residue at position 17 (Lys17) is an N6-succinyllysine; alternate. Tyr25 carries the phosphotyrosine modification. N6-succinyllysine is present on Lys41. His59 provides a ligand contact to O2. His88 is a heme b binding site. Position 103 is a phosphoserine (Ser103). The residue at position 109 (Thr109) is a Phosphothreonine. Residues Ser125 and Ser132 each carry the phosphoserine modification. A phosphothreonine mark is found at Thr135 and Thr138. Ser139 is subject to Phosphoserine.

Belongs to the globin family. In terms of assembly, heterotetramer of two alpha chains and two beta chains. As to expression, red blood cells.

Its function is as follows. Involved in oxygen transport from the lung to the various peripheral tissues. In terms of biological role, hemopressin acts as an antagonist peptide of the cannabinoid receptor CNR1. Hemopressin-binding efficiently blocks cannabinoid receptor CNR1 and subsequent signaling. The sequence is that of Hemoglobin subunit alpha (HBA) from Balaenoptera acutorostrata (Common minke whale).